A 221-amino-acid chain; its full sequence is Phosphoribosylformylglycinamidine synthase subunit PurQ (221 aa).

A Glutamine amidotransferase type-1 domain is found at 8 to 221 (NVGIIRFPGT…GLKFFKSFLD (214 aa)). The active-site Nucleophile is Cys91. Residues His198 and Glu200 contribute to the active site.

In terms of assembly, part of the FGAM synthase complex composed of 1 PurL, 1 PurQ and 2 PurS subunits.

The protein localises to the cytoplasm. It carries out the reaction N(2)-formyl-N(1)-(5-phospho-beta-D-ribosyl)glycinamide + L-glutamine + ATP + H2O = 2-formamido-N(1)-(5-O-phospho-beta-D-ribosyl)acetamidine + L-glutamate + ADP + phosphate + H(+). It catalyses the reaction L-glutamine + H2O = L-glutamate + NH4(+). It functions in the pathway purine metabolism; IMP biosynthesis via de novo pathway; 5-amino-1-(5-phospho-D-ribosyl)imidazole from N(2)-formyl-N(1)-(5-phospho-D-ribosyl)glycinamide: step 1/2. Its function is as follows. Part of the phosphoribosylformylglycinamidine synthase complex involved in the purines biosynthetic pathway. Catalyzes the ATP-dependent conversion of formylglycinamide ribonucleotide (FGAR) and glutamine to yield formylglycinamidine ribonucleotide (FGAM) and glutamate. The FGAM synthase complex is composed of three subunits. PurQ produces an ammonia molecule by converting glutamine to glutamate. PurL transfers the ammonia molecule to FGAR to form FGAM in an ATP-dependent manner. PurS interacts with PurQ and PurL and is thought to assist in the transfer of the ammonia molecule from PurQ to PurL. The protein is Phosphoribosylformylglycinamidine synthase subunit PurQ of Methanosphaera stadtmanae (strain ATCC 43021 / DSM 3091 / JCM 11832 / MCB-3).